Reading from the N-terminus, the 750-residue chain is Photosystem I P700 chlorophyll a apoprotein A1 (750 aa).

The next 8 helical transmembrane spans lie at 70–93, 156–179, 195–219, 291–309, 346–369, 385–411, 433–455, and 531–549; these read VFSA…FHGA, LYCT…FHYH, LNHH…HVSL, IAHH…GHMY, WHAQ…HHMY, LSLF…IFMV, AIIS…LYIH, and FLVH…LILL. The [4Fe-4S] cluster site is built by C573 and C582. Transmembrane regions (helical) follow at residues 589 to 610 and 664 to 686; these read HVFL…HFSW and LSAY…MFLF. A chlorophyll a'-binding site is contributed by H675. 2 residues coordinate chlorophyll a: M683 and Y691. W692 is a phylloquinone binding site. A helical membrane pass occupies residues 724–744; sequence AVGVTHYLLGGIATTWAFFLA.

It belongs to the PsaA/PsaB family. The PsaA/B heterodimer binds the P700 chlorophyll special pair and subsequent electron acceptors. PSI consists of a core antenna complex that captures photons, and an electron transfer chain that converts photonic excitation into a charge separation. The eukaryotic PSI reaction center is composed of at least 11 subunits. The cofactor is P700 is a chlorophyll a/chlorophyll a' dimer, A0 is one or more chlorophyll a, A1 is one or both phylloquinones and FX is a shared 4Fe-4S iron-sulfur center..

Its subcellular location is the plastid. It is found in the chloroplast thylakoid membrane. It catalyses the reaction reduced [plastocyanin] + hnu + oxidized [2Fe-2S]-[ferredoxin] = oxidized [plastocyanin] + reduced [2Fe-2S]-[ferredoxin]. Functionally, psaA and PsaB bind P700, the primary electron donor of photosystem I (PSI), as well as the electron acceptors A0, A1 and FX. PSI is a plastocyanin-ferredoxin oxidoreductase, converting photonic excitation into a charge separation, which transfers an electron from the donor P700 chlorophyll pair to the spectroscopically characterized acceptors A0, A1, FX, FA and FB in turn. Oxidized P700 is reduced on the lumenal side of the thylakoid membrane by plastocyanin. The protein is Photosystem I P700 chlorophyll a apoprotein A1 of Phalaenopsis aphrodite subsp. formosana (Moth orchid).